The sequence spans 471 residues: Secretogranin-3 (471 aa).

The signal sequence occupies residues 1 to 22 (MGFLWTGSWILVLVLNSGPIQA). Disordered regions lie at residues 24–73 (PKPE…SNFS), 92–145 (KAKQ…HQLD), 208–231 (ANNY…KIPE), and 345–405 (KLEK…DEAK). Residues 28-45 (GSQDKSLHNRELSAERPL) show a composition bias toward basic and acidic residues. Phosphoserine is present on Ser-40. Ser-40 is a glycosylation site (O-linked (Xyl...) (chondroitin sulfate) serine). A compositionally biased stretch (low complexity) spans 62 to 73 (PSESKPSESNFS). Composition is skewed to basic and acidic residues over residues 106-142 (LNVD…DGLH), 214-231 (APEK…KIPE), 345-355 (KLEKNTTDSKS), and 363-405 (EKSH…DEAK). The residue at position 365 (Ser-365) is a Phosphoserine.

Interacts with CHGA. Interacts with secretogranin II/SCG2. Interacts (via C-terminus) with CPE. In terms of tissue distribution, expression restricted to the brain and pituitary gland. Not detected in the adrenal gland.

Its subcellular location is the cytoplasmic vesicle. It is found in the secretory vesicle. The protein localises to the secretory vesicle membrane. It localises to the secreted. Functionally, member of the granin protein family that regulates the biogenesis of secretory granules. Acts as a sorting receptor for intragranular proteins including chromogranin A/CHGA. May also play a role in angiogenesis. Promotes endothelial proliferation, migration and tube formation through MEK/ERK signaling pathway. This chain is Secretogranin-3 (Scg3), found in Rattus norvegicus (Rat).